A 76-amino-acid chain; its full sequence is Mating-type pheromone BBP1(1) (76 aa).

A Cysteine methyl ester modification is found at cysteine 73. A lipid anchor (S-farnesyl cysteine) is attached at cysteine 73. Residues 74–76 constitute a propeptide, removed in mature form; that stretch reads VVA.

It localises to the cell membrane. Activates B-regulated development. This chain is Mating-type pheromone BBP1(1) (BBP1(1)), found in Schizophyllum commune (Split gill fungus).